Consider the following 62-residue polypeptide: UPF0370 protein ESA_00777 (62 aa).

The helical transmembrane segment at 4-24 threads the bilayer; that stretch reads LGKYWWVLVLVFLLGVLLNVI. The segment covering 36–51 has biased composition (basic and acidic residues); it reads MDNRPELPPHRDFNDK. A disordered region spans residues 36-62; it reads MDNRPELPPHRDFNDKWDDEDDWPKKK. Residues 52–62 are compositionally biased toward acidic residues; it reads WDDEDDWPKKK.

It belongs to the UPF0370 family.

The protein localises to the cell membrane. The chain is UPF0370 protein ESA_00777 from Cronobacter sakazakii (strain ATCC BAA-894) (Enterobacter sakazakii).